Here is a 695-residue protein sequence, read N- to C-terminus: Segment polarity protein dishevelled homolog DVL-1 (695 aa).

In terms of domain architecture, DIX spans 1 to 85 (MAETKIIYHM…RVVSWLVLAE (85 aa)). A disordered region spans residues 89–235 (SDAGSQGTDS…QRLRQTDRAS (147 aa)). Residues 142–151 (SHRRERARRR) are compositionally biased toward basic residues. Positions 152–171 (NRDEAARTNGHPRGDRRRDL) are enriched in basic and acidic residues. The segment covering 177 to 192 (SASTVLSSELESSSFI) has biased composition (low complexity). S194 carries the post-translational modification Phosphoserine. Residues 201-214 (SRLSSSTEQSTSSR) show a composition bias toward low complexity. Residues 215–228 (LVRKHKCRRRKQRL) show a composition bias toward basic residues. Positions 251–323 (TVTLNMERHH…NDDAVRVLRE (73 aa)) constitute a PDZ domain. The region spanning 425 to 499 (PDSGLEIRDR…SEQCYYVFGD (75 aa)) is the DEP domain. Positions 559 to 580 (SCGSGSAGSQQSEGSKSSGSTR) are enriched in low complexity. The interval 559-641 (SCGSGSAGSQ…SQASAVAPGL (83 aa)) is disordered. Positions 622–635 (SQLSRGSSPRSQAS) are enriched in polar residues.

It belongs to the DSH family. As to quaternary structure, interacts with CXXC4. Interacts (via PDZ domain) with TMEM88. Interacts with BRD7 and INVS. Interacts (via PDZ domain) with VANGL1 and VANGL2 (via C-terminus). Interacts (via PDZ domain) with NXN. Interacts with ARRB1; the interaction is enhanced by phosphorylation of DVL1. Interacts with CYLD. Interacts (via PDZ domain) with RYK. Self-associates (via DIX domain) and forms higher homooligomers. Interacts (via PDZ domain) with DACT1 and FZD7, where DACT1 and FZD7 compete for the same binding site. Interacts (via DEP domain) with MUSK; the interaction is direct and mediates the formation a DVL1, MUSK and PAK1 ternary complex involved in AChR clustering. Interacts with DCDC2. Interacts with FOXK2. Interacts with PKD1 (via extracellular domain). Interacts (via PDZ domain) with CCDC88C/DAPLE; competes with CCDC88C for binding to frizzled receptor FZD7 and dissociates from CCDC88C following initiation of non-canonical Wnt signaling when CCDC88C displaces DVL1 from ligand-activated FZD7. Ubiquitinated; undergoes both 'Lys-48'-linked ubiquitination, leading to its subsequent degradation by the ubiquitin-proteasome pathway, and 'Lys-63'-linked ubiquitination. The interaction with INVS is required for ubiquitination. Deubiquitinated by CYLD, which acts on 'Lys-63'-linked ubiquitin chains. As to expression, high levels are seen in the brain, testis and kidney, lower levels in the ovary, breast, muscle, liver and small intestine, and very low levels are seen in the spleen and thymus. A moderate level expression is seen in the heart.

It is found in the cell membrane. It localises to the cytoplasm. Its subcellular location is the cytosol. The protein localises to the cytoplasmic vesicle. Functionally, participates in Wnt signaling by binding to the cytoplasmic C-terminus of frizzled family members and transducing the Wnt signal to down-stream effectors. Plays a role both in canonical and non-canonical Wnt signaling. Plays a role in the signal transduction pathways mediated by multiple Wnt genes. Required for LEF1 activation upon WNT1 and WNT3A signaling. DVL1 and PAK1 form a ternary complex with MUSK which is important for MUSK-dependent regulation of AChR clustering during the formation of the neuromuscular junction (NMJ). The chain is Segment polarity protein dishevelled homolog DVL-1 (Dvl1) from Mus musculus (Mouse).